We begin with the raw amino-acid sequence, 1400 residues long: DNA-directed RNA polymerase subunit beta' (1400 aa).

Cys70, Cys72, Cys85, and Cys88 together coordinate Zn(2+). Asp460, Asp462, and Asp464 together coordinate Mg(2+). Residues Cys814, Cys887, Cys894, and Cys897 each contribute to the Zn(2+) site.

The protein belongs to the RNA polymerase beta' chain family. In terms of assembly, the RNAP catalytic core consists of 2 alpha, 1 beta, 1 beta' and 1 omega subunit. When a sigma factor is associated with the core the holoenzyme is formed, which can initiate transcription. Mg(2+) is required as a cofactor. Zn(2+) serves as cofactor.

It carries out the reaction RNA(n) + a ribonucleoside 5'-triphosphate = RNA(n+1) + diphosphate. Functionally, DNA-dependent RNA polymerase catalyzes the transcription of DNA into RNA using the four ribonucleoside triphosphates as substrates. The sequence is that of DNA-directed RNA polymerase subunit beta' from Marinomonas sp. (strain MWYL1).